A 194-amino-acid chain; its full sequence is Ribose 1,5-bisphosphate phosphokinase PhnN (194 aa).

ATP is bound at residue 24–31 (GPSGAGKD).

Belongs to the ribose 1,5-bisphosphokinase family.

It carries out the reaction alpha-D-ribose 1,5-bisphosphate + ATP = 5-phospho-alpha-D-ribose 1-diphosphate + ADP. Its pathway is metabolic intermediate biosynthesis; 5-phospho-alpha-D-ribose 1-diphosphate biosynthesis; 5-phospho-alpha-D-ribose 1-diphosphate from D-ribose 5-phosphate (route II): step 3/3. Its function is as follows. Catalyzes the phosphorylation of ribose 1,5-bisphosphate to 5-phospho-D-ribosyl alpha-1-diphosphate (PRPP). The sequence is that of Ribose 1,5-bisphosphate phosphokinase PhnN from Rhodopseudomonas palustris (strain ATCC BAA-98 / CGA009).